Reading from the N-terminus, the 321-residue chain is MESPNHTDVDPSVFFLLGIPGLEQFHLWLSLPVCGLGTATIVGNITILVVVATEPVLHKPVYLFLCMLSTIDLAASVSTVPKLLAIFWCGAGHISASACLAQMFFIHAFCMMESTVLLAMAFDRYVAICHPLRYATILTDTIIAHIGVAAVVRGSLLMLPCPFLIGRLNFCQSHVILHTYCEHMAVVKLACGDTRPNRVYGLTAALLVIGVDLFCIGLSYALSAQAVLRLSSHEARSKALGTCGSHVCVILISYTPALFSFFTHRFGHHVPVHIHILLANVYLLLPPALNPVVYGVKTKQIRKRVVRVFQSGQGMGIKASE.

Topologically, residues 1–27 are extracellular; that stretch reads MESPNHTDVDPSVFFLLGIPGLEQFHL. N5 carries an N-linked (GlcNAc...) asparagine glycan. Residues 28-48 form a helical membrane-spanning segment; the sequence is WLSLPVCGLGTATIVGNITIL. The Cytoplasmic segment spans residues 49-56; the sequence is VVVATEPV. The chain crosses the membrane as a helical span at residues 57–77; sequence LHKPVYLFLCMLSTIDLAASV. Residues 78–101 lie on the Extracellular side of the membrane; it reads STVPKLLAIFWCGAGHISASACLA. C99 and C191 are oxidised to a cystine. A helical membrane pass occupies residues 102–122; that stretch reads QMFFIHAFCMMESTVLLAMAF. Residues 123–141 lie on the Cytoplasmic side of the membrane; the sequence is DRYVAICHPLRYATILTDT. Residues 142–162 traverse the membrane as a helical segment; sequence IIAHIGVAAVVRGSLLMLPCP. Over 163–198 the chain is Extracellular; that stretch reads FLIGRLNFCQSHVILHTYCEHMAVVKLACGDTRPNR. The helical transmembrane segment at 199 to 219 threads the bilayer; the sequence is VYGLTAALLVIGVDLFCIGLS. At 220–239 the chain is on the cytoplasmic side; sequence YALSAQAVLRLSSHEARSKA. A helical membrane pass occupies residues 240–260; it reads LGTCGSHVCVILISYTPALFS. The Extracellular segment spans residues 261-275; it reads FFTHRFGHHVPVHIH. Residues 276 to 296 form a helical membrane-spanning segment; sequence ILLANVYLLLPPALNPVVYGV. At 297–315 the chain is on the cytoplasmic side; that stretch reads KTKQIRKRVVRVFQSGQGM.

The protein belongs to the G-protein coupled receptor 1 family.

The protein resides in the cell membrane. Functionally, odorant receptor. The protein is Olfactory receptor 52P1 of Homo sapiens (Human).